Here is a 613-residue protein sequence, read N- to C-terminus: Vitamin B12 transporter BtuB (613 aa).

An N-terminal signal peptide occupies residues 1–22; that stretch reads MQKSLLAIAMASLLTPISYLHA. Positions 29–36 match the TonB box motif; sequence DTVVVTAN. The TBDR plug domain occupies 41-154; that stretch reads VESSVLASIS…IGGVIHIKTI (114 aa). Residues 159 to 613 enclose the TBDR beta-barrel domain; it reads QTKHDANLGY…NWFATVNYRF (455 aa). The TonB C-terminal box motif lies at 591–613; it reads HSSGGKYYVGEGRNWFATVNYRF.

This sequence belongs to the TonB-dependent receptor family. BtuB (TC 1.B.14.3.1) subfamily.

It is found in the cell outer membrane. In terms of biological role, involved in the active translocation of vitamin B12 (cyanocobalamin) across the outer membrane to the periplasmic space. It derives its energy for transport by interacting with the trans-periplasmic membrane protein TonB. The polypeptide is Vitamin B12 transporter BtuB (Vibrio vulnificus (strain YJ016)).